A 134-amino-acid polypeptide reads, in one-letter code: Putative thioredoxin 2 (134 aa).

Residues 3-106 (STVELTKENF…LTDVIGQARK (104 aa)) enclose the Thioredoxin domain. Cysteine 31 and cysteine 34 are disulfide-bonded. The interval 115–134 (AVAEQQAQAGQNGQEGQEGQ) is disordered. Over residues 117–134 (AEQQAQAGQNGQEGQEGQ) the composition is skewed to low complexity.

This sequence belongs to the thioredoxin family.

It localises to the cytoplasm. In terms of biological role, component of the thioredoxin-thioredoxin reductase system. Participates in various redox reactions through the reversible oxidation of its active center dithiol to a disulfide and catalyzes dithiol-disulfide exchange reactions. In Streptomyces coelicolor (strain ATCC BAA-471 / A3(2) / M145), this protein is Putative thioredoxin 2 (trxC).